The sequence spans 374 residues: MISQINNEERDYKLEAYDYLLDPSLIASKPSAIRHASRLMIVRNSFLEEDCLTNKFTNNLLDEFREGDLVVVNNTKVMKARLKVELENKKLVELLVLERSHECVWLCLAKPAKKLKINRKLKLKSPLEQEINLIVDGVDEETGGRFIKFPENITCLNSMNELLDKYGEIPLPPYIKNSEEDSFHEKSYQTEYATNPGAVAAPTAGLHLSKSLISNLKKKGVIILPITLHVGYGTFKPIDQEDLSNLKLHKEWVSVNKEVVNEIKRIKKTDRKIIAIGTTSVRALESCYSHEINDFIPIAKYVNLVIKPGYKFKVVDGLLTNFHLPKSSLLLLVSAMIGRERLLELYKKAIKEKFRFFSYGDAMYISPDSLLEKK.

Belongs to the QueA family. In terms of assembly, monomer.

Its subcellular location is the cytoplasm. The enzyme catalyses 7-aminomethyl-7-carbaguanosine(34) in tRNA + S-adenosyl-L-methionine = epoxyqueuosine(34) in tRNA + adenine + L-methionine + 2 H(+). Its pathway is tRNA modification; tRNA-queuosine biosynthesis. In terms of biological role, transfers and isomerizes the ribose moiety from AdoMet to the 7-aminomethyl group of 7-deazaguanine (preQ1-tRNA) to give epoxyqueuosine (oQ-tRNA). This Prochlorococcus marinus (strain AS9601) protein is S-adenosylmethionine:tRNA ribosyltransferase-isomerase.